Here is a 187-residue protein sequence, read N- to C-terminus: HTH-type transcriptional regulator NfxB (187 aa).

Positions 26 to 45 form a DNA-binding region, H-T-H motif; sequence LKELAEAAGVSKATLHRFCG.

Its function is as follows. Confers resistance to guinolones. May negatively regulate the expression of genes that are associated with cell permeability to drugs. The protein is HTH-type transcriptional regulator NfxB (nfxB) of Pseudomonas aeruginosa (strain ATCC 15692 / DSM 22644 / CIP 104116 / JCM 14847 / LMG 12228 / 1C / PRS 101 / PAO1).